A 394-amino-acid polypeptide reads, in one-letter code: Phosphoglycerate kinase (394 aa).

Residues 21–23 (DFN), arginine 36, 59–62 (HMGR), arginine 118, and arginine 151 each bind substrate. ATP-binding positions include lysine 202, glutamate 324, and 350–353 (GGDS).

This sequence belongs to the phosphoglycerate kinase family. In terms of assembly, monomer.

It localises to the cytoplasm. It catalyses the reaction (2R)-3-phosphoglycerate + ATP = (2R)-3-phospho-glyceroyl phosphate + ADP. It participates in carbohydrate degradation; glycolysis; pyruvate from D-glyceraldehyde 3-phosphate: step 2/5. The polypeptide is Phosphoglycerate kinase (Exiguobacterium sibiricum (strain DSM 17290 / CCUG 55495 / CIP 109462 / JCM 13490 / 255-15)).